Reading from the N-terminus, the 1174-residue chain is ATP-dependent DNA helicase SRS2 (1174 aa).

Residues 14–316 (QLNTQQRAAA…IILVENYRSS (303 aa)) form the UvrD-like helicase ATP-binding domain. Residue 38-43 (GTGKTK) coordinates ATP. Positions 222 to 243 (LLMYTFRLLTRVRVLSNIKHVL) are leucine-zipper. Arginine 314 contributes to the ATP binding site. In terms of domain architecture, UvrD-like helicase C-terminal spans 317-654 (QKILNTSEIL…TISTIHGAKG (338 aa)). Positions 676 to 704 (DDKKDESEEDEEEDQENSKKDASPKKTRV) are disordered. Serine 833 bears the Phosphoserine mark. 3 disordered regions span residues 865 to 896 (SKIN…SPTK), 909 to 973 (NVPS…DKVT), and 994 to 1024 (ELHP…SNSD). Polar residues-rich tracts occupy residues 909–922 (NVPS…STGK) and 935–955 (TDIS…NKTS). The segment covering 956 to 973 (HMSDDLMRPSPTRKDKVT) has biased composition (basic and acidic residues). The segment covering 1007–1023 (SLTSSEFSGFSSACSNS) has biased composition (low complexity).

This sequence belongs to the helicase family. UvrD subfamily.

The protein localises to the nucleus. The catalysed reaction is Couples ATP hydrolysis with the unwinding of duplex DNA by translocating in the 3'-5' direction.. It catalyses the reaction ATP + H2O = ADP + phosphate + H(+). Functionally, ATP-dependent DNA helicase involved in DNA repair at least for UV-induced lesions. The polarity of the helicase activity was determined to be 3' to 5'. In Saccharomyces cerevisiae (strain ATCC 204508 / S288c) (Baker's yeast), this protein is ATP-dependent DNA helicase SRS2 (SRS2).